The sequence spans 1290 residues: Vacuolating cytotoxin autotransporter (1290 aa).

An N-terminal signal peptide occupies residues 1 to 33; it reads MEIQQTHRKINRPLVSLALVGALVSITPQQSHA. A disordered region spans residues 326-374; the sequence is PPEGGYKDKPKDKPSNTTQNNANNNQQNSAQNNSNTQVINPPNSAQKTE. Over residues 330-339 the composition is skewed to basic and acidic residues; it reads GYKDKPKDKP. Positions 340–362 are enriched in low complexity; sequence SNTTQNNANNNQQNSAQNNSNTQ. Polar residues predominate over residues 363-374; that stretch reads VINPPNSAQKTE. Residues 1018–1290 enclose the Autotransporter domain; the sequence is KYEKPTNVWA…ASNLGMRYSF (273 aa).

It localises to the periplasm. The protein resides in the secreted. Its subcellular location is the cell surface. It is found in the cell outer membrane. Functionally, induces vacuolation of eukaryotic cells. Causes ulceration and gastric lesions. In Helicobacter pylori (strain ATCC 700392 / 26695) (Campylobacter pylori), this protein is Vacuolating cytotoxin autotransporter (vacA).